Here is a 1180-residue protein sequence, read N- to C-terminus: IQ domain-containing protein N (1180 aa).

Residues 34–78 form a disordered region; that stretch reads HPPAPAHPSLLDKMEKAPPQPQHEGLKSKEHLPQQPAEGKTASRR. The IQ 1 domain maps to 103 to 132; the sequence is HARAATLIQANWRGYWLRQKLISQMMAAKA. Disordered stretches follow at residues 283 to 324, 476 to 496, and 786 to 820; these read RVSA…ETPK, MSKT…PQTR, and QRLG…TQGG. 5 IQ domains span residues 926–955, 956–978, 979–1001, 1113–1142, and 1143–1165; these read RILA…GAMV, IQAT…ATTT, IQSA…MLHP, QDKA…AAKI, and VQAT…LLGP.

In terms of assembly, interacts with calmodulin.

In terms of biological role, essential for spermiogenesis and fertilization. May be required for manchette assembly in elongating spermatids. In Homo sapiens (Human), this protein is IQ domain-containing protein N.